Here is a 253-residue protein sequence, read N- to C-terminus: Transmembrane protein 69 (253 aa).

Helical transmembrane passes span 104–124 (ALYLGLAGLIPFVSAPLLMNV), 137–157 (VAYGASILSFLGGVRWGFAIP), 165–185 (DWMNLTNSTVPALLAWLALLF), 192–212 (AAVLVIMGLGIALHYDLALLP), and 223–243 (AILTVVAVFSLVGSLINSSVY).

It localises to the membrane. In Xenopus tropicalis (Western clawed frog), this protein is Transmembrane protein 69 (tmem69).